A 139-amino-acid polypeptide reads, in one-letter code: Nucleoside diphosphate kinase (139 aa).

K11, F59, R87, T93, R104, and N114 together coordinate ATP. H117 functions as the Pros-phosphohistidine intermediate in the catalytic mechanism.

This sequence belongs to the NDK family. As to quaternary structure, homotetramer. Requires Mg(2+) as cofactor.

It localises to the cytoplasm. It carries out the reaction a 2'-deoxyribonucleoside 5'-diphosphate + ATP = a 2'-deoxyribonucleoside 5'-triphosphate + ADP. The catalysed reaction is a ribonucleoside 5'-diphosphate + ATP = a ribonucleoside 5'-triphosphate + ADP. Major role in the synthesis of nucleoside triphosphates other than ATP. The ATP gamma phosphate is transferred to the NDP beta phosphate via a ping-pong mechanism, using a phosphorylated active-site intermediate. The polypeptide is Nucleoside diphosphate kinase (Flavobacterium psychrophilum (strain ATCC 49511 / DSM 21280 / CIP 103535 / JIP02/86)).